The chain runs to 450 residues: Glucose-6-phosphate isomerase (450 aa).

E290 functions as the Proton donor in the catalytic mechanism. Residues H311 and K425 contribute to the active site.

This sequence belongs to the GPI family.

It is found in the cytoplasm. It carries out the reaction alpha-D-glucose 6-phosphate = beta-D-fructose 6-phosphate. It participates in carbohydrate biosynthesis; gluconeogenesis. It functions in the pathway carbohydrate degradation; glycolysis; D-glyceraldehyde 3-phosphate and glycerone phosphate from D-glucose: step 2/4. In terms of biological role, catalyzes the reversible isomerization of glucose-6-phosphate to fructose-6-phosphate. The chain is Glucose-6-phosphate isomerase from Listeria monocytogenes serovar 1/2a (strain ATCC BAA-679 / EGD-e).